The sequence spans 346 residues: [LysW]-lysine/[LysW]-ornithine hydrolase (346 aa).

His68 lines the Zn(2+) pocket. Asp70 is a catalytic residue. Residue Asp92 coordinates Zn(2+). Glu122 functions as the Proton acceptor in the catalytic mechanism. The Zn(2+) site is built by Glu123, Glu146, and His317.

This sequence belongs to the peptidase M20A family. LysK subfamily. The cofactor is Zn(2+). Requires Co(2+) as cofactor.

It is found in the cytoplasm. The catalysed reaction is [amino-group carrier protein]-C-terminal-gamma-(L-lysyl)-L-glutamate + H2O = [amino-group carrier protein]-C-terminal-L-glutamate + L-lysine. The enzyme catalyses [amino-group carrier protein]-C-terminal-gamma-(L-ornithyl)-L-glutamate + H2O = [amino-group carrier protein]-C-terminal-L-glutamate + L-ornithine. Its pathway is amino-acid biosynthesis; L-lysine biosynthesis via AAA pathway; L-lysine from L-alpha-aminoadipate (Thermus route): step 5/5. The protein operates within amino-acid biosynthesis; L-arginine biosynthesis. Its function is as follows. Catalyzes the release of L-lysine from [LysW]-gamma-L-lysine and the release of L-ornithine from [LysW]-L-ornithine. In Saccharolobus islandicus (strain Y.N.15.51 / Yellowstone #2) (Sulfolobus islandicus), this protein is [LysW]-lysine/[LysW]-ornithine hydrolase.